The sequence spans 417 residues: Gamma-glutamyl phosphate reductase (417 aa).

It belongs to the gamma-glutamyl phosphate reductase family.

The protein resides in the cytoplasm. The catalysed reaction is L-glutamate 5-semialdehyde + phosphate + NADP(+) = L-glutamyl 5-phosphate + NADPH + H(+). Its pathway is amino-acid biosynthesis; L-proline biosynthesis; L-glutamate 5-semialdehyde from L-glutamate: step 2/2. Catalyzes the NADPH-dependent reduction of L-glutamate 5-phosphate into L-glutamate 5-semialdehyde and phosphate. The product spontaneously undergoes cyclization to form 1-pyrroline-5-carboxylate. The chain is Gamma-glutamyl phosphate reductase from Photorhabdus laumondii subsp. laumondii (strain DSM 15139 / CIP 105565 / TT01) (Photorhabdus luminescens subsp. laumondii).